Consider the following 428-residue polypeptide: C4-dicarboxylate transport protein (428 aa).

9 helical membrane passes run 4-24 (SLFK…ILLG), 44-64 (LIKM…IAGM), 76-96 (VALL…LIIV), 142-162 (IGAF…MFGF), 184-204 (VIFG…FGAM), 222-242 (LIVC…GSIA), 289-309 (VVGL…SIYL), 326-346 (IFHQ…AAGV), and 352-372 (IVLA…LALI).

The protein belongs to the dicarboxylate/amino acid:cation symporter (DAACS) (TC 2.A.23) family.

It is found in the cell inner membrane. Its function is as follows. Responsible for the transport of dicarboxylates such as succinate, fumarate, and malate from the periplasm across the membrane. This is C4-dicarboxylate transport protein from Citrobacter koseri (strain ATCC BAA-895 / CDC 4225-83 / SGSC4696).